The sequence spans 263 residues: Taurine import ATP-binding protein TauB (263 aa).

An ABC transporter domain is found at 4–235 (LTAEAISLSF…RYAAGETVRS (232 aa)). ATP is bound at residue 40–47 (GPSGCGKS).

It belongs to the ABC transporter superfamily. Taurine importer (TC 3.A.1.17.1) family. As to quaternary structure, the complex is composed of two ATP-binding proteins (TauB), two transmembrane proteins (TauC) and a solute-binding protein (TauA).

It is found in the cell inner membrane. The catalysed reaction is taurine(out) + ATP + H2O = taurine(in) + ADP + phosphate + H(+). Its function is as follows. Part of the ABC transporter complex TauABC involved in taurine import. Responsible for energy coupling to the transport system. The protein is Taurine import ATP-binding protein TauB of Pseudomonas aeruginosa (strain UCBPP-PA14).